Consider the following 369-residue polypeptide: NAD(P)H-quinone oxidoreductase subunit 1, chloroplastic (369 aa).

The next 8 helical transmembrane spans lie at 29–49 (IWII…VLVI), 97–117 (IWLF…SYLV), 129–149 (LGIG…GLLM), 167–187 (AAQS…ISLL), 205–225 (LLGW…ISSL), 255–275 (FGLF…FVTV), 305–325 (IINA…FLFV), and 348–368 (FLLP…ILLL).

The protein belongs to the complex I subunit 1 family. In terms of assembly, NDH is composed of at least 16 different subunits, 5 of which are encoded in the nucleus.

It is found in the plastid. Its subcellular location is the chloroplast thylakoid membrane. The catalysed reaction is a plastoquinone + NADH + (n+1) H(+)(in) = a plastoquinol + NAD(+) + n H(+)(out). The enzyme catalyses a plastoquinone + NADPH + (n+1) H(+)(in) = a plastoquinol + NADP(+) + n H(+)(out). Its function is as follows. NDH shuttles electrons from NAD(P)H:plastoquinone, via FMN and iron-sulfur (Fe-S) centers, to quinones in the photosynthetic chain and possibly in a chloroplast respiratory chain. The immediate electron acceptor for the enzyme in this species is believed to be plastoquinone. Couples the redox reaction to proton translocation, and thus conserves the redox energy in a proton gradient. The sequence is that of NAD(P)H-quinone oxidoreductase subunit 1, chloroplastic from Angiopteris evecta (Mule's foot fern).